A 1541-amino-acid chain; its full sequence is WD repeat-containing protein 62 (1541 aa).

Ala2 bears the N-acetylalanine mark. Residue Ser33 is modified to Phosphoserine. Thr46 carries the phosphothreonine modification. WD repeat units follow at residues 109-150, 153-194, 196-234, 291-330, 357-396, 402-450, 490-529, 532-574, 578-618, 626-665, 671-713, and 714-752; these read TARK…QVAE, GHKY…VVAS, KVSCRVIALSFSEDSSYFVTVGNRHVRFWFLEVSTEAKV, INLKVSLSSCLCVSQELIFCGCTDGIVRIFQAHSLHYLAN, AVYPDTVALTFDPNHQWLSCVYKDHSIYIWDVKDINKVGK, FHSS…DSHW, DMKAGVRVMQVSPDGQHLASGDRSGNLRIHELHFMDELVR, AHDA…SLEQ, DHSS…DGLH, AEKTTLYDMDIDITQKYVAVACQDRNVRVYNTVNGKQKKC, GDEG…KMFG, and HSEIITGMKFTYDCRHLITVSGDSCVFIWHLGPEITNCM. At Ser501 the chain carries Phosphoserine. Disordered regions lie at residues 762 to 820 and 911 to 1050; these read REQP…KESL and LSQS…LPQT. The span at 770–780 shows a compositional bias: basic and acidic residues; the sequence is KDGKWSRDPRQ. A compositionally biased stretch (polar residues) spans 781 to 795; sequence ETCTSMPSEISLSPG. Residues 797–809 are compositionally biased toward acidic residues; the sequence is QTEDELEEECEPE. One copy of the WD 13 repeat lies at 803 to 846; that stretch reads EEECEPEELLKTPSKESLDSDPRCLLTNGKLPLWAKRLLGDDDV. Residues 810–820 are compositionally biased toward basic and acidic residues; sequence ELLKTPSKESL. Over residues 937–948 the composition is skewed to low complexity; the sequence is VSELLCSLESEV. Ser943 bears the Phosphoserine mark. Residues 1008-1026 show a composition bias toward pro residues; that stretch reads PPRPDPDPPFDVAVPPAPG. A Phosphothreonine modification is found at Thr1050. Phosphoserine occurs at positions 1095, 1125, and 1151. Disordered regions lie at residues 1133 to 1153 and 1185 to 1212; these read LAGSQPRAEPLRAGTGYTSPG and SSSSVPPTDKTPPTPTALPTPGLAQGVH. A WD 14 repeat occupies 1138–1180; the sequence is PRAEPLRAGTGYTSPGRTNVLSAGKAEEPLEAWSPLTSCLTGL. Positions 1193 to 1202 are enriched in pro residues; sequence DKTPPTPTAL. Phosphoserine is present on residues Ser1235, Ser1255, and Ser1256. Residues 1273–1293 form a disordered region; sequence TVTPSSDSEGQEPALPSRGNH. At Thr1275 the chain carries Phosphothreonine.

Can form homodimers (via C-terminus). Interacts (via C-terminus) with MAPKBP1 (via C-terminus). Interacts with CDK5RAP2, CEP152, CEP63 and KIAA0753. CEP63, CDK5RAP2, CEP152, WDR62 are proposed to form a stepwise assembled complex at the centrosome forming a ring near parental centrioles.

It localises to the nucleus. The protein localises to the cytoplasm. The protein resides in the cytoskeleton. It is found in the spindle pole. Its subcellular location is the microtubule organizing center. It localises to the centrosome. The protein localises to the centriole. Its function is as follows. Required for cerebral cortical development. Plays a role in neuronal proliferation and migration. Plays a role in mother-centriole-dependent centriole duplication; the function seems also to involve CEP152, CDK5RAP2 and CEP63 through a stepwise assembled complex at the centrosome that recruits CDK2 required for centriole duplication. This chain is WD repeat-containing protein 62 (WDR62), found in Sus scrofa (Pig).